Reading from the N-terminus, the 273-residue chain is 4-hydroxy-tetrahydrodipicolinate reductase 1 (273 aa).

NAD(+) contacts are provided by residues 13-18 and Glu39; that span reads GAAGRM. Residue Arg40 participates in NADP(+) binding. NAD(+) contacts are provided by residues 103–105 and 127–130; these read GTT and SGNM. His161 (proton donor/acceptor) is an active-site residue. Residue His162 participates in (S)-2,3,4,5-tetrahydrodipicolinate binding. The active-site Proton donor is Lys165. Position 171 to 172 (171 to 172) interacts with (S)-2,3,4,5-tetrahydrodipicolinate; it reads GT.

The protein belongs to the DapB family.

It is found in the cytoplasm. The catalysed reaction is (S)-2,3,4,5-tetrahydrodipicolinate + NAD(+) + H2O = (2S,4S)-4-hydroxy-2,3,4,5-tetrahydrodipicolinate + NADH + H(+). The enzyme catalyses (S)-2,3,4,5-tetrahydrodipicolinate + NADP(+) + H2O = (2S,4S)-4-hydroxy-2,3,4,5-tetrahydrodipicolinate + NADPH + H(+). It functions in the pathway amino-acid biosynthesis; L-lysine biosynthesis via DAP pathway; (S)-tetrahydrodipicolinate from L-aspartate: step 4/4. Functionally, catalyzes the conversion of 4-hydroxy-tetrahydrodipicolinate (HTPA) to tetrahydrodipicolinate. This is 4-hydroxy-tetrahydrodipicolinate reductase 1 from Mesorhizobium japonicum (strain LMG 29417 / CECT 9101 / MAFF 303099) (Mesorhizobium loti (strain MAFF 303099)).